We begin with the raw amino-acid sequence, 197 residues long: Peptidoglycan-recognition protein 1 (197 aa).

A signal peptide spans 1–23 (MKLATITFFLLTEIFFYISYAEA). Intrachain disulfides connect cysteine 31-cysteine 154 and cysteine 68-cysteine 74. Residues 53–180 (KPLERVVIHH…RNVKATKSPG (128 aa)) enclose the N-acetylmuramoyl-L-alanine amidase domain.

This sequence belongs to the N-acetylmuramoyl-L-alanine amidase 2 family. Localizes to plasma (at protein level).

The protein resides in the secreted. Functionally, peptidoglycan-recognition protein probably involved in innate immunity by binding to peptidoglycans (PGN) of bacteria and activating the prophenoloxidase (proPO) cascade immune response. Binds to 1,3-beta-D-glucan and PGN. This is Peptidoglycan-recognition protein 1 (PGRP-1) from Holotrichia diomphalia (Korean black chafer).